Consider the following 317-residue polypeptide: 4-hydroxy-3-methylbut-2-enyl diphosphate reductase (317 aa).

Cys-12 is a [4Fe-4S] cluster binding site. Residues His-41 and His-74 each coordinate (2E)-4-hydroxy-3-methylbut-2-enyl diphosphate. His-41 and His-74 together coordinate dimethylallyl diphosphate. Isopentenyl diphosphate is bound by residues His-41 and His-74. Cys-97 contributes to the [4Fe-4S] cluster binding site. His-125 serves as a coordination point for (2E)-4-hydroxy-3-methylbut-2-enyl diphosphate. His-125 contacts dimethylallyl diphosphate. Isopentenyl diphosphate is bound at residue His-125. Glu-127 acts as the Proton donor in catalysis. Thr-168 is a (2E)-4-hydroxy-3-methylbut-2-enyl diphosphate binding site. Cys-198 contacts [4Fe-4S] cluster. 4 residues coordinate (2E)-4-hydroxy-3-methylbut-2-enyl diphosphate: Ser-226, Ser-227, Asn-228, and Ser-270. 4 residues coordinate dimethylallyl diphosphate: Ser-226, Ser-227, Asn-228, and Ser-270. Residues Ser-226, Ser-227, Asn-228, and Ser-270 each contribute to the isopentenyl diphosphate site.

Belongs to the IspH family. Homodimer. [4Fe-4S] cluster serves as cofactor.

The enzyme catalyses isopentenyl diphosphate + 2 oxidized [2Fe-2S]-[ferredoxin] + H2O = (2E)-4-hydroxy-3-methylbut-2-enyl diphosphate + 2 reduced [2Fe-2S]-[ferredoxin] + 2 H(+). The catalysed reaction is dimethylallyl diphosphate + 2 oxidized [2Fe-2S]-[ferredoxin] + H2O = (2E)-4-hydroxy-3-methylbut-2-enyl diphosphate + 2 reduced [2Fe-2S]-[ferredoxin] + 2 H(+). It participates in isoprenoid biosynthesis; dimethylallyl diphosphate biosynthesis; dimethylallyl diphosphate from (2E)-4-hydroxy-3-methylbutenyl diphosphate: step 1/1. It functions in the pathway isoprenoid biosynthesis; isopentenyl diphosphate biosynthesis via DXP pathway; isopentenyl diphosphate from 1-deoxy-D-xylulose 5-phosphate: step 6/6. Catalyzes the conversion of 1-hydroxy-2-methyl-2-(E)-butenyl 4-diphosphate (HMBPP) into a mixture of isopentenyl diphosphate (IPP) and dimethylallyl diphosphate (DMAPP). Acts in the terminal step of the DOXP/MEP pathway for isoprenoid precursor biosynthesis. The protein is 4-hydroxy-3-methylbut-2-enyl diphosphate reductase of Serratia proteamaculans (strain 568).